Here is a 33-residue protein sequence, read N- to C-terminus: Putative makorin-5 (33 aa).

The chain is Putative makorin-5 (MKRN9P) from Homo sapiens (Human).